A 110-amino-acid polypeptide reads, in one-letter code: HIT-like protein CPn_0488/CP_0266/CPj0488/CpB0508 (110 aa).

An HIT domain is found at Val3–Ala110. The Histidine triad motif signature appears at His95–His99.

The polypeptide is HIT-like protein CPn_0488/CP_0266/CPj0488/CpB0508 (Chlamydia pneumoniae (Chlamydophila pneumoniae)).